The chain runs to 62 residues: Large ribosomal subunit protein uL29 (62 aa).

It belongs to the universal ribosomal protein uL29 family.

In Enterococcus faecalis (strain ATCC 700802 / V583), this protein is Large ribosomal subunit protein uL29.